The following is a 377-amino-acid chain: D-alanine--D-alanine ligase (377 aa).

One can recognise an ATP-grasp domain in the interval 137–346 (KELMTVNGIR…RSQQAEKLIQ (210 aa)). Position 167–222 (167–222 (SKQLGEVVFVKAANQGSSVGVSRVTNAEEYENALRDSFQYDEKLLVEKAVESPTEL)) interacts with ATP. The Mg(2+) site is built by aspartate 300, glutamate 313, and asparagine 315.

Belongs to the D-alanine--D-alanine ligase family. Mg(2+) serves as cofactor. It depends on Mn(2+) as a cofactor.

The protein resides in the cytoplasm. It catalyses the reaction 2 D-alanine + ATP = D-alanyl-D-alanine + ADP + phosphate + H(+). The protein operates within cell wall biogenesis; peptidoglycan biosynthesis. Cell wall formation. This Oenococcus oeni (strain ATCC BAA-331 / PSU-1) protein is D-alanine--D-alanine ligase.